A 122-amino-acid polypeptide reads, in one-letter code: Large ribosomal subunit protein uL14 (122 aa).

The protein belongs to the universal ribosomal protein uL14 family. As to quaternary structure, part of the 50S ribosomal subunit. Forms a cluster with proteins L3 and L19. In the 70S ribosome, L14 and L19 interact and together make contacts with the 16S rRNA in bridges B5 and B8.

Functionally, binds to 23S rRNA. Forms part of two intersubunit bridges in the 70S ribosome. The chain is Large ribosomal subunit protein uL14 from Ectopseudomonas mendocina (strain ymp) (Pseudomonas mendocina).